A 161-amino-acid chain; its full sequence is Large ribosomal subunit protein uL15 (161 aa).

Residues 1 to 44 (MKLSEIADNAGSRKKRMRVGRGIGSGKGKTAGRGGKGQTARSGV) are disordered. The span at 21–37 (RGIGSGKGKTAGRGGKG) shows a compositional bias: gly residues.

The protein belongs to the universal ribosomal protein uL15 family. In terms of assembly, part of the 50S ribosomal subunit.

Binds to the 23S rRNA. The polypeptide is Large ribosomal subunit protein uL15 (Rhodopseudomonas palustris (strain BisA53)).